We begin with the raw amino-acid sequence, 278 residues long: Large ribosomal subunit protein uL2 (278 aa).

Disordered stretches follow at residues 1 to 58 and 210 to 278; these read MGIR…GGGH and GRMR…GKKR. Residues 23–33 show a composition bias toward basic and acidic residues; sequence EVTRSEPEKSL. Residues 40-49 are compositionally biased toward low complexity; it reads SGGRNSTGRI. 2 stretches are compositionally biased toward basic residues: residues 210 to 220 and 269 to 278; these read GRMRWKGKRPS and VRRRRTGKKR.

This sequence belongs to the universal ribosomal protein uL2 family. In terms of assembly, part of the 50S ribosomal subunit. Forms a bridge to the 30S subunit in the 70S ribosome.

Functionally, one of the primary rRNA binding proteins. Required for association of the 30S and 50S subunits to form the 70S ribosome, for tRNA binding and peptide bond formation. It has been suggested to have peptidyltransferase activity; this is somewhat controversial. Makes several contacts with the 16S rRNA in the 70S ribosome. The sequence is that of Large ribosomal subunit protein uL2 from Beutenbergia cavernae (strain ATCC BAA-8 / DSM 12333 / CCUG 43141 / JCM 11478 / NBRC 16432 / NCIMB 13614 / HKI 0122).